The following is a 225-amino-acid chain: Biosynthetic peptidoglycan transglycosylase (225 aa).

Residues 8 to 28 (VLLIFIGAILLIQLWIFSSLV) traverse the membrane as a helical segment.

Belongs to the glycosyltransferase 51 family.

It is found in the cell inner membrane. It carries out the reaction [GlcNAc-(1-&gt;4)-Mur2Ac(oyl-L-Ala-gamma-D-Glu-L-Lys-D-Ala-D-Ala)](n)-di-trans,octa-cis-undecaprenyl diphosphate + beta-D-GlcNAc-(1-&gt;4)-Mur2Ac(oyl-L-Ala-gamma-D-Glu-L-Lys-D-Ala-D-Ala)-di-trans,octa-cis-undecaprenyl diphosphate = [GlcNAc-(1-&gt;4)-Mur2Ac(oyl-L-Ala-gamma-D-Glu-L-Lys-D-Ala-D-Ala)](n+1)-di-trans,octa-cis-undecaprenyl diphosphate + di-trans,octa-cis-undecaprenyl diphosphate + H(+). It functions in the pathway cell wall biogenesis; peptidoglycan biosynthesis. In terms of biological role, peptidoglycan polymerase that catalyzes glycan chain elongation from lipid-linked precursors. This chain is Biosynthetic peptidoglycan transglycosylase, found in Acinetobacter baumannii (strain ACICU).